Consider the following 257-residue polypeptide: tRNA (guanine-N(7)-)-methyltransferase (257 aa).

The interval 1 to 58 (MQPIEQPGTGPDDITPESQDTNTAESAESGAETGHPRRIRSFVRRAGRTSTGQQRAIN) is disordered. Polar residues predominate over residues 16 to 26 (PESQDTNTAES). Over residues 36 to 47 (PRRIRSFVRRAG) the composition is skewed to basic residues. S-adenosyl-L-methionine-binding residues include Glu-89, Glu-114, Asp-141, and Asp-164. Asp-164 is a catalytic residue. Lys-168 contributes to the substrate binding site. The interaction with RNA stretch occupies residues 170-175 (RHNKRR). Substrate is bound by residues Asp-200 and 235 to 238 (TKFE).

Belongs to the class I-like SAM-binding methyltransferase superfamily. TrmB family.

It carries out the reaction guanosine(46) in tRNA + S-adenosyl-L-methionine = N(7)-methylguanosine(46) in tRNA + S-adenosyl-L-homocysteine. It participates in tRNA modification; N(7)-methylguanine-tRNA biosynthesis. Catalyzes the formation of N(7)-methylguanine at position 46 (m7G46) in tRNA. This chain is tRNA (guanine-N(7)-)-methyltransferase, found in Ralstonia pickettii (strain 12J).